Here is a 339-residue protein sequence, read N- to C-terminus: Aspartate carbamoyltransferase catalytic subunit (339 aa).

R59 and T60 together coordinate carbamoyl phosphate. K87 lines the L-aspartate pocket. Carbamoyl phosphate contacts are provided by R109, H142, and Q145. Residues R182 and R253 each contribute to the L-aspartate site. 2 residues coordinate carbamoyl phosphate: G294 and P295.

The protein belongs to the aspartate/ornithine carbamoyltransferase superfamily. ATCase family. As to quaternary structure, heterododecamer (2C3:3R2) of six catalytic PyrB chains organized as two trimers (C3), and six regulatory PyrI chains organized as three dimers (R2).

It catalyses the reaction carbamoyl phosphate + L-aspartate = N-carbamoyl-L-aspartate + phosphate + H(+). The protein operates within pyrimidine metabolism; UMP biosynthesis via de novo pathway; (S)-dihydroorotate from bicarbonate: step 2/3. Catalyzes the condensation of carbamoyl phosphate and aspartate to form carbamoyl aspartate and inorganic phosphate, the committed step in the de novo pyrimidine nucleotide biosynthesis pathway. This chain is Aspartate carbamoyltransferase catalytic subunit, found in Prochlorococcus marinus (strain NATL2A).